Reading from the N-terminus, the 213-residue chain is MTTRKSVLREVEEFRLAVELVELGARLQVLESEVAISRDRLTRLYKELRGVSPPKGQLPSSPEWFLTWRPNVHASLFLSAYRFLMAQGKQSRIRCIVSAYRLYVEHISLIGEDLTLSFTRAWTMLRFLDSGTLVSSTCKCCGGSFVRHKYDLQTNFVCGLCAPPPRAAKGKKLATSAEPFVVPEDLQQTISIEPAAMNRPKDAPLRRMGSLKP.

Zn(2+) contacts are provided by cysteine 138, cysteine 141, cysteine 158, and cysteine 161.

The protein belongs to the FlhC family. As to quaternary structure, heterohexamer composed of two FlhC and four FlhD subunits. Each FlhC binds a FlhD dimer, forming a heterotrimer, and a hexamer assembles by dimerization of two heterotrimers. Zn(2+) serves as cofactor.

Its subcellular location is the cytoplasm. Functions in complex with FlhD as a master transcriptional regulator that regulates transcription of several flagellar and non-flagellar operons by binding to their promoter region. Activates expression of class 2 flagellar genes, including fliA, which is a flagellum-specific sigma factor that turns on the class 3 genes. Also regulates genes whose products function in a variety of physiological pathways. This Cupriavidus metallidurans (strain ATCC 43123 / DSM 2839 / NBRC 102507 / CH34) (Ralstonia metallidurans) protein is Flagellar transcriptional regulator FlhC.